Consider the following 138-residue polypeptide: MNSTFTSQPLLNRSEPRVFKEFYRLVIGCNPAWQVMAQVSLGEILRSKDADAYSCINAKRVDLLLVDGNCRPRHVVEYQRGAHHQGAAAARDAVKKAALRCAGIGYYEVVAGQTTPSDLRRLVEKLVEKPELPICAPD.

The signal sequence occupies residues 1 to 37 (MNSTFTSQPLLNRSEPRVFKEFYRLVIGCNPAWQVMA).

To H.influenzae HI_1631.

This is an uncharacterized protein from Sinorhizobium fredii (strain NBRC 101917 / NGR234).